A 196-amino-acid chain; its full sequence is Major capsid protein (196 aa).

Positions 27–55 are disordered; that stretch reads TAPVRPQRKRRQRGRNNKPRGGNGFARRS. Residues 32–44 are compositionally biased toward basic residues; it reads PQRKRRQRGRNNK.

It belongs to the luteoviruses capsid protein family.

Its subcellular location is the virion. Its function is as follows. Major capsid protein. This chain is Major capsid protein, found in Bean leafroll virus (BLRV).